Consider the following 550-residue polypeptide: Chaperonin GroEL 2 (550 aa).

ATP-binding positions include 30–33 (TLGP), lysine 51, 87–91 (DGTTT), glycine 415, and aspartate 496.

It belongs to the chaperonin (HSP60) family. In terms of assembly, forms a cylinder of 14 subunits composed of two heptameric rings stacked back-to-back. Interacts with the co-chaperonin GroES.

The protein localises to the cytoplasm. The enzyme catalyses ATP + H2O + a folded polypeptide = ADP + phosphate + an unfolded polypeptide.. In terms of biological role, together with its co-chaperonin GroES, plays an essential role in assisting protein folding. The GroEL-GroES system forms a nano-cage that allows encapsulation of the non-native substrate proteins and provides a physical environment optimized to promote and accelerate protein folding. This Bradyrhizobium diazoefficiens (strain JCM 10833 / BCRC 13528 / IAM 13628 / NBRC 14792 / USDA 110) protein is Chaperonin GroEL 2.